We begin with the raw amino-acid sequence, 639 residues long: tRNA uridine 5-carboxymethylaminomethyl modification enzyme MnmG (639 aa).

FAD contacts are provided by residues 13–18 (GGGHAG), Val125, and Ser180. 273–287 (GPRYCPSIEDKVVRF) contacts NAD(+). An FAD-binding site is contributed by Gln370. Positions 620 to 639 (KRQGGNGPQSPRPDDGRARA) are disordered.

It belongs to the MnmG family. As to quaternary structure, homodimer. Heterotetramer of two MnmE and two MnmG subunits. It depends on FAD as a cofactor.

It is found in the cytoplasm. Its function is as follows. NAD-binding protein involved in the addition of a carboxymethylaminomethyl (cmnm) group at the wobble position (U34) of certain tRNAs, forming tRNA-cmnm(5)s(2)U34. The polypeptide is tRNA uridine 5-carboxymethylaminomethyl modification enzyme MnmG (Thioalkalivibrio sulfidiphilus (strain HL-EbGR7)).